We begin with the raw amino-acid sequence, 69 residues long: uncharacterized protein (69 aa).

The tract at residues 21-42 (MYAANKKSDARRRGKVGKEQWE) is disordered. Positions 35–69 (KVGKEQWEKEMEQYNIQKAQFEKELKEKKEKELKK) form a coiled coil.

This is an uncharacterized protein from Acheta domesticus (House cricket).